Consider the following 476-residue polypeptide: Adenosylhomocysteinase (476 aa).

The substrate site is built by threonine 62, aspartate 141, and glutamate 201. 202 to 204 serves as a coordination point for NAD(+); the sequence is TTT. Residues lysine 231 and aspartate 235 each contribute to the substrate site. NAD(+)-binding positions include asparagine 236, 265 to 270, glutamate 288, asparagine 323, 344 to 346, and asparagine 389; these read GYGDVG and IGH.

This sequence belongs to the adenosylhomocysteinase family. NAD(+) serves as cofactor.

The protein resides in the cytoplasm. It catalyses the reaction S-adenosyl-L-homocysteine + H2O = L-homocysteine + adenosine. The protein operates within amino-acid biosynthesis; L-homocysteine biosynthesis; L-homocysteine from S-adenosyl-L-homocysteine: step 1/1. In terms of biological role, may play a key role in the regulation of the intracellular concentration of adenosylhomocysteine. The protein is Adenosylhomocysteinase of Myxococcus xanthus (strain DK1622).